The following is a 1407-amino-acid chain: DNA-directed RNA polymerase subunit beta' (1407 aa).

Positions 70, 72, 85, and 88 each coordinate Zn(2+). Mg(2+) contacts are provided by aspartate 460, aspartate 462, and aspartate 464. Zn(2+) is bound by residues cysteine 814, cysteine 888, cysteine 895, and cysteine 898. The residue at position 972 (lysine 972) is an N6-acetyllysine.

It belongs to the RNA polymerase beta' chain family. In terms of assembly, the RNAP catalytic core consists of 2 alpha, 1 beta, 1 beta' and 1 omega subunit. When a sigma factor is associated with the core the holoenzyme is formed, which can initiate transcription. Mg(2+) serves as cofactor. The cofactor is Zn(2+).

It catalyses the reaction RNA(n) + a ribonucleoside 5'-triphosphate = RNA(n+1) + diphosphate. DNA-dependent RNA polymerase catalyzes the transcription of DNA into RNA using the four ribonucleoside triphosphates as substrates. The polypeptide is DNA-directed RNA polymerase subunit beta' (Shigella dysenteriae serotype 1 (strain Sd197)).